The following is a 511-amino-acid chain: Aprataxin and PNK-like factor (511 aa).

Residues 1–108 (MSGGFELQPR…RILSIPSEVE (108 aa)) enclose the FHA-like domain. Residue S116 is modified to Phosphoserine; by ATM. Position 149 is a phosphoserine (S149). Positions 182 to 191 (RKRILPTWML) match the KBM motif. Residues 223-370 (KSQLNTTQQG…ATDSVLQGSE (148 aa)) form a disordered region. Composition is skewed to polar residues over residues 225–249 (QLNT…SAEQ) and 263–293 (STIS…NAQR). Residues 304 to 315 (VSKHKIATKRTP) show a composition bias toward basic residues. Residues 324-344 (CSENCSSAQGDSLQDESQGSH) are compositionally biased toward polar residues. The span at 345–355 (SESSSNPSNPE) shows a compositional bias: low complexity. A glycoprotein-binding residues include R376, Y381, Y386, and R387. A PBZ-type 1 zinc finger spans residues 377–398 (TSCMYGANCYRKNPVHFQHFSH). The flexible linker stretch occupies residues 406–416 (GVQIVGQDETD). The segment at 419–440 (PECPYGPSCYRKNPQHKIEYRH) adopts a PBZ-type 2 zinc-finger fold. The a glycoprotein site is built by Y423, Y428, and R429. The interval 449-497 (LDEDNDNVGQPNEYDLNDSFLDDEEEDYEPTDEDSDWEPGKEDEEKEDV) is disordered. Positions 468 to 497 (FLDDEEEDYEPTDEDSDWEPGKEDEEKEDV) are enriched in acidic residues. Residues 476–500 (YEPTDEDSDWEPGKEDEEKEDVEEL) carry the NAP1L motif motif. Residues 487 to 511 (PGKEDEEKEDVEELLKEAKRFMKRK) are a coiled coil.

Belongs to the APLF family. Interacts with LIG4. Interacts with PARP1. Interacts with XRCC4. Interacts (via KBM motif) with XRCC5 and XRCC6; promoting recruitment to DNA damage sites. Interacts with XRCC1. Interacts (via C-terminal disordered region) with histones; interacts with histone H2A, H2B and H3-H4. In terms of processing, poly-ADP-ribosylated. In addition to binding non covalently poly-ADP-ribose via its PBZ-type zinc fingers, the protein is also covalently poly-ADP-ribosylated by PARP1. Post-translationally, phosphorylated in an ATM-dependent manner upon double-strand DNA break.

It is found in the nucleus. It localises to the chromosome. Its subcellular location is the cytoplasm. The protein resides in the cytosol. In terms of biological role, histone chaperone involved in single-strand and double-strand DNA break repair. Recruited to sites of DNA damage through interaction with branched poly-ADP-ribose chains, a polymeric post-translational modification synthesized transiently at sites of chromosomal damage to accelerate DNA strand break repair reactions. Following recruitment to DNA damage sites, acts as a histone chaperone that mediates histone eviction during DNA repair and promotes recruitment of histone variant MACROH2A1. Also has a nuclease activity: displays apurinic-apyrimidinic (AP) endonuclease and 3'-5' exonuclease activities in vitro. Also able to introduce nicks at hydroxyuracil and other types of pyrimidine base damage. Together with PARP3, promotes the retention of the LIG4-XRCC4 complex on chromatin and accelerate DNA ligation during non-homologous end-joining (NHEJ). Also acts as a negative regulator of cell pluripotency by promoting histone exchange. Required for the embryo implantation during the epithelial to mesenchymal transition in females. The polypeptide is Aprataxin and PNK-like factor (Homo sapiens (Human)).